We begin with the raw amino-acid sequence, 311 residues long: MPVTSVYQKDKPFGARLNLSPFECLKIEKHSGGADALEFISNKYDALTQVLSRADILKIACHDCAAHALQAVLDYEQVFRQRGFARADIIKITGNGGGAQALKAVVVHGPTLNECGFSQADIVRIADNIGGAQALKAVLEHGPTLNERDYSGADIVKIAGNGGGARALKAVVMHGPTLCESGYSGADIVKIASNGGGAQALEAVAMHGSTLCERGYCRTDIAKIAGNGGGAQALKAIVMHGPTLCERGYSRTDIVKIADNNGGAQALKAVFEHGPALTQAGRSNEDIVNMAARTGAAGQIRKMAAQLSGRQ.

One copy of the Cryptic repeat -1 repeat lies at 19–50 (LSPFECLKIEKHSGGADALEFISNKYDALTQV). A Cryptic repeat 0 repeat occupies 51-83 (LSRADILKIACHDCAAHALQAVLDYEQVFRQRG). 6 Core repeat repeats span residues 84-116 (FARA…NECG), 117-149 (FSQA…NERD), 150-182 (YSGA…CESG), 183-215 (YSGA…CERG), 216-248 (YCRT…CERG), and 249-281 (YSRT…TQAG). The stretch at 282–311 (RSNEDIVNMAARTGAAGQIRKMAAQLSGRQ) is one Cryptic repeat +1 repeat.

This sequence belongs to the transcription activator-like effector (TALE) family. Bat subfamily.

Its function is as follows. Does not bind DNA, probably because it has too few core repeats. The sequence is that of Burkholderia TALE-like protein 3 from Mycetohabitans rhizoxinica (strain DSM 19002 / CIP 109453 / HKI 454) (Paraburkholderia rhizoxinica).